The following is a 246-amino-acid chain: Zorya protein ZorB (246 aa).

Residues 20 to 40 (FWISYADLMTAMMVLFLVVMV) form a helical membrane-spanning segment. The 133-residue stretch at 86–218 (CHDNRISFGE…RVELRMQFFG (133 aa)) folds into the OmpA-like domain.

The protein belongs to the MotB family.

Its subcellular location is the cell inner membrane. Component of antiviral defense system Zorya type I, composed of ZorA, ZorB, ZorC and ZorD. Expression of Zorya type I in E.coli (strain MG1655) confers 10,000-fold resistance to phage SECphi27, 100-fold resistance to lambda, and 10-fold resistance to T7. While most T7 infected Zorya-containing cells undergo abortive infection, a minority produce viable phage progeny. These eventually accumulate to a high multiplicity of infection, leading to culture collapse by 2 hours after initial infection. ZorA and ZorB probably assemble in the cell inner membrane and exert their effect there. The chain is Zorya protein ZorB from Escherichia coli O139:H28 (strain E24377A / ETEC).